The chain runs to 512 residues: Transcriptional activator CadC (512 aa).

Topologically, residues 1-154 are cytoplasmic; that stretch reads MQQPVVRVGE…PPEQSPVKSK (154 aa). Residues 3–102 constitute a DNA-binding region (ompR/PhoB-type); sequence QPVVRVGEWL…VPKRGYKLMV (100 aa). A helical transmembrane segment spans residues 155–180; the sequence is RFTTFWVWFFFLLSLGICVALVAFSS. Over 181 to 512 the chain is Periplasmic; sequence LDTRLPMSKS…PYLDKFLASE (332 aa). A disulfide bridge links C208 with C272.

As to quaternary structure, homodimer. Dimerization of the periplasmic domain is required for activation of the cadBA operon. Interacts strongly with the lysine permease LysP in the absence of lysine or at low lysine concentrations. Interaction is markedly attenuated under increasing lysine levels. Concomitant pH-dependent protonation of periplasmic amino acids in both proteins dissolves their electrostatic connections resulting in further destabilization of the CadC/LysP interaction. Post-translationally, contains a functionally important disulfide bond, which may provide structural support for the pH-dependent activation via a switch of the sensor between the inactive and active state.

The protein localises to the cell inner membrane. Its activity is regulated as follows. Activation of CadC requires two stimuli, lysine and low pH. CadC shows an extremely low affinity for lysine, and it senses the extracellular lysine not directly but indirectly via interaction with the lysine permease LysP. At a low external lysine concentration, CadC is inactivated by an interaction with LysP. When lysine is abundantly available, the interaction between LysP and CadC is released, and CadC becomes susceptible to activation by low pH. Acidification of the external milieu is sensed by protonation of a patch of acidic amino acids within the periplasmic domain and associated to conformational and/or oligomerization effects. The pH-dependent regulation may be due to the presence/absence of a disulfide bond within the periplasmic domain. At pH 7.6, a disulfide bond is found in the inactive state of CadC. At pH 5.8, disulfide bond formation is prevented, which transforms CadC into a semi-active state with respect to both the pH and the lysine stimuli. Activity is also feedback inhibited by cadaverine. Cadaverine binds first to the central cavity, which putatively triggers intramolecular rearrangements to expose the binding sites for cadaverine at the dimer interface, which inactivates CadC and consequently shuts off transcription of the cadBA operon. In terms of biological role, regulates the lysine- and pH-dependent expression of the lysine decarboxylase CadA and the cadaverine-lysine antiporter CadB. At low external pH, and in the presence of external lysine, CadC activates transcription of the cadBA operon by binding directly to two sites, Cad1 and Cad2, within the cadBA promoter region (Pcad). Preferentially binds to AT-rich regions within the Cad1 promoter. The protein is Transcriptional activator CadC (cadC) of Escherichia coli (strain K12).